Here is a 378-residue protein sequence, read N- to C-terminus: Protein RecA (378 aa).

Residue 79-86 (GPESSGKT) participates in ATP binding.

Belongs to the RecA family.

Its subcellular location is the cytoplasm. Can catalyze the hydrolysis of ATP in the presence of single-stranded DNA, the ATP-dependent uptake of single-stranded DNA by duplex DNA, and the ATP-dependent hybridization of homologous single-stranded DNAs. It interacts with LexA causing its activation and leading to its autocatalytic cleavage. The sequence is that of Protein RecA from Streptococcus equi subsp. zooepidemicus (strain MGCS10565).